The chain runs to 463 residues: Stress-activated protein kinase jnk-1 (463 aa).

Positions 1–12 are enriched in polar residues; it reads MEERLSTTSSYP. The tract at residues 1–23 is disordered; sequence MEERLSTTSSYPSHPGRSVEEDH. Residues 119–412 enclose the Protein kinase domain; the sequence is YQNLRLIGSG…ISVDDALRHP (294 aa). ATP contacts are provided by residues 126–131 and Lys-148; that span reads GSGAQG. Asp-244 acts as the Proton acceptor in catalysis. At Thr-276 the chain carries Phosphothreonine. Residues 276 to 278 carry the TXY motif; it reads TPY. The residue at position 278 (Tyr-278) is a Phosphotyrosine.

The protein belongs to the protein kinase superfamily. CMGC Ser/Thr protein kinase family. MAP kinase subfamily. In terms of assembly, binds to the scaffolding protein, unc-16. Unc-16 also binds other components of the JNK signaling pathway. Interacts with daf-16. Requires Mg(2+) as cofactor. Dually phosphorylated on Thr-276 and Tyr-278, which activates the enzyme. In terms of tissue distribution, expressed in most neurons, including nerve ring, head ganglions, dorsal and ventral nerve cords and tail ganglions. The Thr-276/Tyr-278 phosphorylated form is present in the nerve ring upon heat exposure.

The protein resides in the cytoplasm. It localises to the perikaryon. The protein localises to the cell projection. It is found in the axon. It catalyses the reaction L-seryl-[protein] + ATP = O-phospho-L-seryl-[protein] + ADP + H(+). The catalysed reaction is L-threonyl-[protein] + ATP = O-phospho-L-threonyl-[protein] + ADP + H(+). Activated by threonine and tyrosine phosphorylation by either of the dual specificity kinases, jkk-1 and mek-1. Its function is as follows. Serine/threonine-protein kinase which responds to activation by environmental stress by phosphorylating a number of transcription factors such as daf-16, and thus regulates transcriptional activity. By phosphorylating daf-16, plays a role in daf-16 nuclear translocation in intestinal cells in response to environmental stresses such as heat and oxidative stresses. Downstream of jkk-1, may coordinate locomotion via type-D GABAergic motoneurons and regulates synaptic vesicle transport in conjunction with unc-16. Independently of jkk-1, may regulate some mechanosensory responses, such as response to touch. Independently of jkk-1 and downstream of mek-1, plays a role in resistance to heavy metals, such as Cu(2+) or Cd(2+). Regulates germline cell apoptosis in response to heavy metals such as Cu(2+) and arsenite. Required for dopaminergic CEP neuron degeneration in response to Mn(2+). Required for normal sleep bout quantity and arousal thresholds during the transition from the last larval stage to adulthood in well-fed animals. Downstream of jkk-1 but independently of mek-1, positively regulates lifespan. The protein is Stress-activated protein kinase jnk-1 (jnk-1) of Caenorhabditis elegans.